A 379-amino-acid polypeptide reads, in one-letter code: Heme A synthase (379 aa).

The disordered stretch occupies residues 1–28; sequence MAGSRSIFEEVQDSQKPAAMPGGVSRDR. 8 consecutive transmembrane segments (helical) span residues 35-55, 124-144, 150-170, 183-203, 227-247, 287-307, 318-338, and 341-361; these read VRVF…IGGL, FLGV…SVPV, LLLL…MVHS, RLAV…WYIL, ATGL…VAGI, FFHR…WIMA, AFDW…MTVM, and SPWY…TLIL. Residue His289 participates in heme binding. Residue His349 participates in heme binding.

It belongs to the COX15/CtaA family. Type 2 subfamily. As to quaternary structure, interacts with CtaB. Heme b is required as a cofactor.

It localises to the cell membrane. It carries out the reaction Fe(II)-heme o + 2 A + H2O = Fe(II)-heme a + 2 AH2. The protein operates within porphyrin-containing compound metabolism; heme A biosynthesis; heme A from heme O: step 1/1. Functionally, catalyzes the conversion of heme O to heme A by two successive hydroxylations of the methyl group at C8. The first hydroxylation forms heme I, the second hydroxylation results in an unstable dihydroxymethyl group, which spontaneously dehydrates, resulting in the formyl group of heme A. This Jannaschia sp. (strain CCS1) protein is Heme A synthase.